A 213-amino-acid chain; its full sequence is ATP phosphoribosyltransferase (213 aa).

This sequence belongs to the ATP phosphoribosyltransferase family. Short subfamily. Heteromultimer composed of HisG and HisZ subunits.

Its subcellular location is the cytoplasm. The catalysed reaction is 1-(5-phospho-beta-D-ribosyl)-ATP + diphosphate = 5-phospho-alpha-D-ribose 1-diphosphate + ATP. The protein operates within amino-acid biosynthesis; L-histidine biosynthesis; L-histidine from 5-phospho-alpha-D-ribose 1-diphosphate: step 1/9. Catalyzes the condensation of ATP and 5-phosphoribose 1-diphosphate to form N'-(5'-phosphoribosyl)-ATP (PR-ATP). Has a crucial role in the pathway because the rate of histidine biosynthesis seems to be controlled primarily by regulation of HisG enzymatic activity. The protein is ATP phosphoribosyltransferase of Anoxybacillus flavithermus (strain DSM 21510 / WK1).